Here is an 841-residue protein sequence, read N- to C-terminus: Copper-transporting P-type ATPase (841 aa).

Transmembrane regions (helical) follow at residues 186–206, 218–238, 256–276, 285–305, 445–465, and 474–494; these read LWVS…PMLG, ATFI…LPFF, IGLG…APGI, GAAV…VFVG, AVFV…WAAI, and GLLA…GLAT. D530 functions as the 4-aspartylphosphate intermediate in the catalytic mechanism. The next 2 membrane-spanning stretches (helical) occupy residues 602-622 and 638-658; these read GIAD…DLGI and GKTV…AVAD. Mg(2+)-binding residues include D729 and D733. 2 consecutive transmembrane segments (helical) span residues 742–762 and 800–820; these read VGIA…ITLV and VAAG…IAAA.

Belongs to the cation transport ATPase (P-type) (TC 3.A.3) family. Type IB subfamily.

It is found in the cell membrane. It carries out the reaction Cu(2+)(in) + ATP + H2O = Cu(2+)(out) + ADP + phosphate + H(+). Involved in copper efflux. In Rhizobium leguminosarum bv. viciae, this protein is Copper-transporting P-type ATPase (actP).